We begin with the raw amino-acid sequence, 175 residues long: Peptide deformylase (175 aa).

Fe cation-binding residues include Cys-92 and His-134. Glu-135 is an active-site residue. His-138 is a Fe cation binding site.

This sequence belongs to the polypeptide deformylase family. Fe(2+) serves as cofactor.

It catalyses the reaction N-terminal N-formyl-L-methionyl-[peptide] + H2O = N-terminal L-methionyl-[peptide] + formate. In terms of biological role, removes the formyl group from the N-terminal Met of newly synthesized proteins. Requires at least a dipeptide for an efficient rate of reaction. N-terminal L-methionine is a prerequisite for activity but the enzyme has broad specificity at other positions. This Blochmanniella floridana protein is Peptide deformylase.